Here is a 252-residue protein sequence, read N- to C-terminus: Streptothricin hydrolase (252 aa).

Cysteine 158 functions as the Nucleophile in the catalytic mechanism. Residues 230 to 242 (AVGPAAAPGLPVS) show a composition bias toward low complexity. The segment at 230–252 (AVGPAAAPGLPVSPAAPPPSPVR) is disordered. A compositionally biased stretch (pro residues) spans 243–252 (PAAPPPSPVR).

It belongs to the isochorismatase family.

It carries out the reaction streptothricin F + H2O = streptothricin F acid. In terms of biological role, catalyzes the hydrolysis of the amide bond of streptolidine lactam, thereby conferring streptothricin (ST) resistance. Can hydrolyze streptothricin-F and streptothricin-D. However, this strain is believed to be a ST nonproducer, which raises the possibility that its true role may not be its involvement in self-resistance to STs. May catalyze the hydrolysis of naturally occurring cyclic amide compounds that are structurally related to STs. This Streptomyces noursei (Streptomyces albulus) protein is Streptothricin hydrolase (sttH).